A 440-amino-acid chain; its full sequence is Transposon Ty1-JR1 Gag polyprotein (440 aa).

Residues 1–16 are compositionally biased toward low complexity; the sequence is MESQQLSQHSHISHGS. 3 disordered regions span residues 1-93, 126-173, and 352-440; these read MESQ…MMTQ, PQSQ…RPPP, and GSRN…PGTY. Polar residues-rich tracts occupy residues 48–60 and 127–152; these read TKAN…TPAS and QSQF…GNTF. The segment covering 153 to 165 has biased composition (low complexity); that stretch reads TDSSSADSDMTST. An RNA-binding region spans residues 299-401; sequence NNGIHINNKV…NSKSKTARAH (103 aa). Residues 402-418 are compositionally biased toward low complexity; the sequence is NVSTSNNSPSTDNDSIS. Position 416 is a phosphoserine (Ser-416). Residues 419-428 are compositionally biased toward polar residues; it reads KSTTEPIQLN. Residues 429-440 show a composition bias toward basic and acidic residues; that stretch reads NKHDLHLRPGTY.

As to quaternary structure, homotrimer.

It localises to the cytoplasm. In terms of biological role, capsid protein (CA) is the structural component of the virus-like particle (VLP), forming the shell that encapsulates the retrotransposons dimeric RNA genome. The particles are assembled from trimer-clustered units and there are holes in the capsid shells that allow for the diffusion of macromolecules. CA also has nucleocapsid-like chaperone activity, promoting primer tRNA(i)-Met annealing to the multipartite primer-binding site (PBS), dimerization of Ty1 RNA and initiation of reverse transcription. This chain is Transposon Ty1-JR1 Gag polyprotein (TY1A-JR1), found in Saccharomyces cerevisiae (strain ATCC 204508 / S288c) (Baker's yeast).